We begin with the raw amino-acid sequence, 420 residues long: D-tagatose-1,6-bisphosphate aldolase subunit GatZ (420 aa).

The protein belongs to the GatZ/KbaZ family. GatZ subfamily. As to quaternary structure, forms a complex with GatY.

The protein operates within carbohydrate metabolism; D-tagatose 6-phosphate degradation; D-glyceraldehyde 3-phosphate and glycerone phosphate from D-tagatose 6-phosphate: step 2/2. Its function is as follows. Component of the tagatose-1,6-bisphosphate aldolase GatYZ that is required for full activity and stability of the Y subunit. Could have a chaperone-like function for the proper and stable folding of GatY. When expressed alone, GatZ does not show any aldolase activity. Is involved in the catabolism of galactitol. This is D-tagatose-1,6-bisphosphate aldolase subunit GatZ from Escherichia coli O45:K1 (strain S88 / ExPEC).